The following is a 122-amino-acid chain: Protein POLR1D, isoform 2 (122 aa).

Position 1 is an N-acetylmethionine (Met1). Positions Ile48–Arg122 are disordered. The segment covering Ser57–Pro83 has biased composition (basic and acidic residues). Basic residues predominate over residues Lys84–Arg96. Position 104 is a phosphoserine (Ser104). Residues Ser110 to Arg122 are compositionally biased toward basic and acidic residues.

The sequence is that of Protein POLR1D, isoform 2 (POLR1D) from Homo sapiens (Human).